The sequence spans 132 residues: MKVVYFSFSGNVRRFIKRSEISDVMEITKDNCTDPFEEPYILVTGTIGFGEVPKEVQSFLEINHHNLRAVAASGNRNWGQNFAKAGRTISEEYHVPLLMKFEVQGSNKDVIEFKNKVGHFNENYEREKVQSY.

The protein belongs to the NrdI family.

Functionally, probably involved in ribonucleotide reductase function. The protein is Protein NrdI of Staphylococcus haemolyticus (strain JCSC1435).